A 666-amino-acid polypeptide reads, in one-letter code: MACPTRRGRQQPGFACEECRRRKARCDRVRPKCGFCTENELQCVFVDKRQQRGPIKGQITSMQSQLATLRWQLDRYLRHRPPPSITMAGELDEPPADIQTMLDDFDVQVAALKQDATATTTMSTSTALMPAPAISSKDAAPAGAGLSWPDPTWLDRQWQDVSSTSLVPPSDLTVSSATTLTDPLSFDLLNETPPPPSTTTTTSTTRRDSCTKVMLTDLIRAELDQLYFDRVHAFCPIIHRRRYFARVARDSHTPAQACLQFAMRTLAAAMSAHCHLSEHLYAETKALLETHSQTPATPRDKVPLEHIQAWLLLSHYELLRIGVHQAMLTAGRAFRLVQMARLSELDAGSDRQLSPPSSSPPSSLTLSPSGENAENFVDAEEGRRTFWLAYCFDRLLCLQNEWPLTLQEEMILTRLPSLEHNYQNNLPARTPFLTEAMAQTGQSTMSPFAECIIMATLHGRCMTHRRFYANSNSTASGSEFESGAATRDFCIRQNWLSNAVDRRVQMLQQVSSPAVDSDPMLLFTQTLGYRATMHLSDTVQQVSWRALASSPVDQQLLSPGATMSLSAAAYHQMASHAAGEIVRLAKAVPSLSPFKAHPFLPDTLACAATFLSTGSPDPTGGEGVQHLLRVLSELRDTHSLARDYLQGLSVQTQDEDHRQDTRWYCT.

The segment at residues 16–43 is a DNA-binding region (zn(2)-C6 fungal-type); sequence CEECRRRKARCDRVRPKCGFCTENELQC. 2 disordered regions span residues 184–206 and 347–373; these read LSFD…STTR and AGSD…GENA. Positions 353–369 are enriched in low complexity; sequence LSPPSSSPPSSLTLSPS.

The protein localises to the nucleus. In terms of biological role, transcription factor that regulates the expression of the gene cluster that mediates the biosynthesis of asperfuranone, a probable antitumor agent. This chain is Asperfuranone cluster transcription factor afoA, found in Emericella nidulans (strain FGSC A4 / ATCC 38163 / CBS 112.46 / NRRL 194 / M139) (Aspergillus nidulans).